A 210-amino-acid polypeptide reads, in one-letter code: Putative 3-methyladenine DNA glycosylase (210 aa).

Belongs to the DNA glycosylase MPG family.

This chain is Putative 3-methyladenine DNA glycosylase, found in Lactobacillus acidophilus (strain ATCC 700396 / NCK56 / N2 / NCFM).